We begin with the raw amino-acid sequence, 261 residues long: Transmembrane and immunoglobulin domain-containing protein 1 (261 aa).

The signal sequence occupies residues 1 to 26 (MVWKITGPLQACQLLLVVLSLPQGRT). Residues 27–113 (SSVLTVNGRT…LQRDQTVSVT (87 aa)) enclose the Ig-like C2-type 1 domain. Topologically, residues 27–215 (SSVLTVNGRT…DFHLLVKDKV (189 aa)) are extracellular. Residues Cys-53 and Cys-102 are joined by a disulfide bond. 6 N-linked (GlcNAc...) asparagine glycosylation sites follow: Asn-57, Asn-82, Asn-92, Asn-117, Asn-157, and Asn-189. The Ig-like C2-type 2 domain maps to 121-206 (PPLLSGNGFQ…SSSLKMETMD (86 aa)). An intrachain disulfide couples Cys-142 to Cys-194. Residues 216–236 (FVMPAEPIIAACVVVVLTMAF) traverse the membrane as a helical segment. At 237 to 261 (ALFSRRKRIMKLCGKKNDPNSETAL) the chain is on the cytoplasmic side.

As to quaternary structure, homodimer. Post-translationally, N-glycosylated.

It is found in the cell membrane. Its subcellular location is the cytoplasm. Functionally, may control cell-cell adhesion, cell migration and proliferation, cell morphology, and protects renal epithelial cells from oxidative cell injury to promote cell survival. This is Transmembrane and immunoglobulin domain-containing protein 1 from Mus musculus (Mouse).